The primary structure comprises 460 residues: Bifunctional protein GlmU (460 aa).

The segment at 1 to 229 (MTNYAIILAA…FNESLGVNDR (229 aa)) is pyrophosphorylase. UDP-N-acetyl-alpha-D-glucosamine-binding positions include 8–11 (LAAG), lysine 22, glutamine 72, and 77–78 (GT). Residue aspartate 102 coordinates Mg(2+). Residues glycine 139, glutamate 154, asparagine 169, and asparagine 227 each coordinate UDP-N-acetyl-alpha-D-glucosamine. Asparagine 227 serves as a coordination point for Mg(2+). The tract at residues 230–250 (VALATAETVMRQRITQKHMVN) is linker. The N-acetyltransferase stretch occupies residues 251 to 460 (GVTFQNPETV…RLAHHPSRSK (210 aa)). 2 residues coordinate UDP-N-acetyl-alpha-D-glucosamine: arginine 332 and lysine 350. The active-site Proton acceptor is histidine 362. Residues tyrosine 365 and asparagine 376 each coordinate UDP-N-acetyl-alpha-D-glucosamine. Acetyl-CoA-binding positions include alanine 379, 385-386 (NY), serine 404, alanine 422, and arginine 439.

The protein in the N-terminal section; belongs to the N-acetylglucosamine-1-phosphate uridyltransferase family. It in the C-terminal section; belongs to the transferase hexapeptide repeat family. As to quaternary structure, homotrimer. Mg(2+) is required as a cofactor.

Its subcellular location is the cytoplasm. It catalyses the reaction alpha-D-glucosamine 1-phosphate + acetyl-CoA = N-acetyl-alpha-D-glucosamine 1-phosphate + CoA + H(+). The enzyme catalyses N-acetyl-alpha-D-glucosamine 1-phosphate + UTP + H(+) = UDP-N-acetyl-alpha-D-glucosamine + diphosphate. The protein operates within nucleotide-sugar biosynthesis; UDP-N-acetyl-alpha-D-glucosamine biosynthesis; N-acetyl-alpha-D-glucosamine 1-phosphate from alpha-D-glucosamine 6-phosphate (route II): step 2/2. Its pathway is nucleotide-sugar biosynthesis; UDP-N-acetyl-alpha-D-glucosamine biosynthesis; UDP-N-acetyl-alpha-D-glucosamine from N-acetyl-alpha-D-glucosamine 1-phosphate: step 1/1. It functions in the pathway bacterial outer membrane biogenesis; LPS lipid A biosynthesis. Its function is as follows. Catalyzes the last two sequential reactions in the de novo biosynthetic pathway for UDP-N-acetylglucosamine (UDP-GlcNAc). The C-terminal domain catalyzes the transfer of acetyl group from acetyl coenzyme A to glucosamine-1-phosphate (GlcN-1-P) to produce N-acetylglucosamine-1-phosphate (GlcNAc-1-P), which is converted into UDP-GlcNAc by the transfer of uridine 5-monophosphate (from uridine 5-triphosphate), a reaction catalyzed by the N-terminal domain. This chain is Bifunctional protein GlmU, found in Streptococcus pyogenes serotype M5 (strain Manfredo).